Here is a 465-residue protein sequence, read N- to C-terminus: MEGEIIAVNGPVIDIYFPDDVPNVYEALELENPVKNEKLVLETRILLGDHRVRAIALGSTDGISRGLKVKRTFHPISVPVSEEVLGRVVNVFGEPIDGGDKIKGEMTPIIKNAVEFRRVEPSYSILETGIKAIDLLTPFPQGGKIGLFGGAGVGKTVLIMELIHNVAVAHGGISVFAGIGERSREGNELWLEMKESGVLSKAVLVFGQMNEPPGVRMRVPLTALTIAEYFRDYLGKDVLLLMDNIFRYVQAGMEVSSMLGRIPSAVGYQPTLITELGEVEERILSTDTGSITAVQAVYVPADDLTDPAPATIFSHLDSTLVLSRSIAEMGIYPAVDPLASSSQILEPKFVGYEHAEVARKVVEILQHYESLKDIISILGVEELSEEDRVIVNRARKIQLFLSQPLFVAAAYTNIPGVYVPREKTIEGFKAIIEGEVDDLPEDAFYMVGTLEDVKKKAQEHGALMY.

149-156 is a binding site for ATP; sequence GGAGVGKT.

Belongs to the ATPase alpha/beta chains family. As to quaternary structure, F-type ATPases have 2 components, CF(1) - the catalytic core - and CF(0) - the membrane proton channel. CF(1) has five subunits: alpha(3), beta(3), gamma(1), delta(1), epsilon(1). CF(0) has three main subunits: a(1), b(2) and c(9-12). The alpha and beta chains form an alternating ring which encloses part of the gamma chain. CF(1) is attached to CF(0) by a central stalk formed by the gamma and epsilon chains, while a peripheral stalk is formed by the delta and b chains.

The protein resides in the cell inner membrane. It catalyses the reaction ATP + H2O + 4 H(+)(in) = ADP + phosphate + 5 H(+)(out). Its function is as follows. Produces ATP from ADP in the presence of a proton gradient across the membrane. The catalytic sites are hosted primarily by the beta subunits. The protein is ATP synthase subunit beta of Dictyoglomus turgidum (strain DSM 6724 / Z-1310).